A 660-amino-acid chain; its full sequence is Histone deacetylase 5 (660 aa).

Ala2 bears the N-acetylalanine mark. Positions 26 to 349 are histone deacetylase; sequence KVGLIYDETM…SLACVQVLLE (324 aa). Residue His158 is the Proton donor/acceptor of the active site. Residues Asp198, His200, and Asp291 each coordinate Zn(2+).

The protein belongs to the histone deacetylase family. HD type 2 subfamily. In terms of assembly, interacts with HDA6. The cofactor is Zn(2+). Expressed in stems, leaves, flowers, siliques and mature seeds.

It is found in the nucleus. The protein localises to the cytoplasm. The enzyme catalyses N(6)-acetyl-L-lysyl-[histone] + H2O = L-lysyl-[histone] + acetate. Inhibited by trichostatin A (TSA), a well-known histone deacetylase inhibitor. Responsible for the deacetylation of lysine residues on the N-terminal part of the core histones (H2A, H2B, H3 and H4). Histone deacetylation gives a tag for epigenetic repression and plays an important role in transcriptional regulation, cell cycle progression and developmental events. Histone deacetylases act via the formation of large multiprotein complexes. Involved in the regulation of flowering time by repressing FLC and AGL27/MAF1 expression. Forms a histone deacetylase complex with HDA6, FLD and MSI4/FVE that represses FLC gene expression to control flowering time. Unlike its tandem duplication HDA18, HDA5 does not seem to be required for the cellular patterning in the root epidermis. The polypeptide is Histone deacetylase 5 (Arabidopsis thaliana (Mouse-ear cress)).